The following is a 65-amino-acid chain: Large ribosomal subunit protein bL35 (65 aa).

Residues 1 to 26 (MPKMKSNKGASKRFKKTASGGFKCKQ) form a disordered region.

It belongs to the bacterial ribosomal protein bL35 family.

This chain is Large ribosomal subunit protein bL35, found in Idiomarina loihiensis (strain ATCC BAA-735 / DSM 15497 / L2-TR).